Reading from the N-terminus, the 257-residue chain is MTPSEFRQSVRSGAFRQPTAGQCGPFAQANLAILPNAYAHDFLRFCQANPKACPLLGVGEPGAFRLDVLGEDLDIRTDVPSYNVYRDGRLTERVESLEALWRDDFVVFAIGCSFSFEDMLAREGIALRHIEEGRNVPMYRTSIPNRRAGIFGGQLVVSMRPLRGADAIRAVQITSRFPGVHGAPVHIGHPLELGIADLGTPDFGDAVTVRDGELPVFWACGVTPQTALMEAKLPLAIAHTPGYMLMTDITNASLAVF.

This sequence belongs to the D-glutamate cyclase family.

The sequence is that of Putative hydro-lyase Bamb_5282 from Burkholderia ambifaria (strain ATCC BAA-244 / DSM 16087 / CCUG 44356 / LMG 19182 / AMMD) (Burkholderia cepacia (strain AMMD)).